The chain runs to 188 residues: Elongation factor P (188 aa).

This sequence belongs to the elongation factor P family.

It is found in the cytoplasm. Its pathway is protein biosynthesis; polypeptide chain elongation. Its function is as follows. Involved in peptide bond synthesis. Stimulates efficient translation and peptide-bond synthesis on native or reconstituted 70S ribosomes in vitro. Probably functions indirectly by altering the affinity of the ribosome for aminoacyl-tRNA, thus increasing their reactivity as acceptors for peptidyl transferase. This chain is Elongation factor P, found in Malacoplasma penetrans (strain HF-2) (Mycoplasma penetrans).